We begin with the raw amino-acid sequence, 214 residues long: Adenylate kinase (214 aa).

Residue 10-15 (GAGKGT) coordinates ATP. Residues 30–59 (STGDMFRAAVKNETPLGLEAKSYMDKGHLV) form an NMP region. AMP-binding positions include Thr31, Arg36, 57 to 59 (HLV), 85 to 88 (GFPR), and Gln92. The tract at residues 126–163 (GRWICPVCGASYHTMFNPPKEAGVCDKDGGKLYQREDD) is LID. Arg127 lines the ATP pocket. Residues Cys130 and Cys133 each coordinate Zn(2+). 136–137 (SY) is a binding site for ATP. Zn(2+) is bound by residues Cys150 and Asp153. Residues Arg160 and Arg171 each coordinate AMP. Gln199 is an ATP binding site.

This sequence belongs to the adenylate kinase family. In terms of assembly, monomer.

Its subcellular location is the cytoplasm. It catalyses the reaction AMP + ATP = 2 ADP. It functions in the pathway purine metabolism; AMP biosynthesis via salvage pathway; AMP from ADP: step 1/1. Functionally, catalyzes the reversible transfer of the terminal phosphate group between ATP and AMP. Plays an important role in cellular energy homeostasis and in adenine nucleotide metabolism. This chain is Adenylate kinase, found in Brevibacillus brevis (strain 47 / JCM 6285 / NBRC 100599).